A 1197-amino-acid polypeptide reads, in one-letter code: Pleckstrin homology domain-containing family A member 7 (1197 aa).

WW domains follow at residues 8-41 (DTLPDNGSYGVCRDGRVFFIDDEARATTWLHPRT) and 53-86 (SDLPSGWEEGFTKEGASFFIDHNQRTTTFIHPVT). The interval 98–148 (LQDQPGGRMLKQPSSTISEASTTVTTSTVDSTSGSKGSRSSGRVHSFGKRD) is disordered. Positions 111 to 140 (SSTISEASTTVTTSTVDSTSGSKGSRSSGR) are enriched in low complexity. The region spanning 158 to 257 (PVVVRGWLYK…WVRAMNQAAL (100 aa)) is the PH domain. Disordered regions lie at residues 348–384 (PGSTPPSRVASRAPSRAVSTPPVVQRNGTPIEQNGMP), 423–467 (LVST…QLPS), and 508–577 (FRHG…TVRP). The segment covering 528–546 (VSSTRNNSDVSRSVSVPPT) has biased composition (low complexity). The segment covering 568 to 577 (TPAERVTVRP) has biased composition (basic and acidic residues). Positions 678-799 (DKILQELEFR…RIEDVMTGLS (122 aa)) form a coiled coil. Disordered regions lie at residues 830-928 (SRCM…SYSN) and 1032-1064 (HQRALVRERKRNLSQGERHHSRASTRPVNSDPG). Residues 913–924 (RQSDERKRDRES) show a composition bias toward basic and acidic residues. Residues 1016–1044 (QRVRMSVEEQLERMKRHQRALVRERKRNL) adopt a coiled-coil conformation. Over residues 1032–1043 (HQRALVRERKRN) the composition is skewed to basic residues.

It localises to the cell junction. The protein localises to the adherens junction. It is found in the cytoplasm. Its subcellular location is the cytoskeleton. The protein resides in the microtubule organizing center. It localises to the centrosome. Functionally, required for zonula adherens biogenesis and maintenance. The polypeptide is Pleckstrin homology domain-containing family A member 7 (plekha7) (Danio rerio (Zebrafish)).